Reading from the N-terminus, the 216-residue chain is Thiamine-phosphate synthase (216 aa).

Residues 41–45 and D77 each bind 4-amino-2-methyl-5-(diphosphooxymethyl)pyrimidine; that span reads QLREK. Residues D78 and D97 each coordinate Mg(2+). S116 is a binding site for 4-amino-2-methyl-5-(diphosphooxymethyl)pyrimidine. 143 to 145 lines the 2-[(2R,5Z)-2-carboxy-4-methylthiazol-5(2H)-ylidene]ethyl phosphate pocket; it reads TTS. K146 is a 4-amino-2-methyl-5-(diphosphooxymethyl)pyrimidine binding site. Residues G174 and 194–195 contribute to the 2-[(2R,5Z)-2-carboxy-4-methylthiazol-5(2H)-ylidene]ethyl phosphate site; that span reads IS.

The protein belongs to the thiamine-phosphate synthase family. Mg(2+) serves as cofactor.

The enzyme catalyses 2-[(2R,5Z)-2-carboxy-4-methylthiazol-5(2H)-ylidene]ethyl phosphate + 4-amino-2-methyl-5-(diphosphooxymethyl)pyrimidine + 2 H(+) = thiamine phosphate + CO2 + diphosphate. The catalysed reaction is 2-(2-carboxy-4-methylthiazol-5-yl)ethyl phosphate + 4-amino-2-methyl-5-(diphosphooxymethyl)pyrimidine + 2 H(+) = thiamine phosphate + CO2 + diphosphate. It catalyses the reaction 4-methyl-5-(2-phosphooxyethyl)-thiazole + 4-amino-2-methyl-5-(diphosphooxymethyl)pyrimidine + H(+) = thiamine phosphate + diphosphate. Its pathway is cofactor biosynthesis; thiamine diphosphate biosynthesis; thiamine phosphate from 4-amino-2-methyl-5-diphosphomethylpyrimidine and 4-methyl-5-(2-phosphoethyl)-thiazole: step 1/1. Condenses 4-methyl-5-(beta-hydroxyethyl)thiazole monophosphate (THZ-P) and 2-methyl-4-amino-5-hydroxymethyl pyrimidine pyrophosphate (HMP-PP) to form thiamine monophosphate (TMP). The protein is Thiamine-phosphate synthase of Pediococcus pentosaceus (strain ATCC 25745 / CCUG 21536 / LMG 10740 / 183-1w).